The following is a 98-amino-acid chain: NADH-ubiquinone oxidoreductase chain 4L (98 aa).

3 consecutive transmembrane segments (helical) span residues 1–21, 29–49, and 61–81; these read MSLTYMNILVAFVISLTGLLM, SLLCLEGMMLSLFVMVTITIL, and IILLVFAACEAALGLALLVMV.

The protein belongs to the complex I subunit 4L family. Core subunit of respiratory chain NADH dehydrogenase (Complex I) which is composed of 45 different subunits.

Its subcellular location is the mitochondrion inner membrane. It carries out the reaction a ubiquinone + NADH + 5 H(+)(in) = a ubiquinol + NAD(+) + 4 H(+)(out). Its function is as follows. Core subunit of the mitochondrial membrane respiratory chain NADH dehydrogenase (Complex I) which catalyzes electron transfer from NADH through the respiratory chain, using ubiquinone as an electron acceptor. Part of the enzyme membrane arm which is embedded in the lipid bilayer and involved in proton translocation. The sequence is that of NADH-ubiquinone oxidoreductase chain 4L (MT-ND4L) from Mystacina tuberculata (New Zealand lesser short-tailed bat).